The primary structure comprises 266 residues: uncharacterized protein (266 aa).

Residues 35–131 (VLVGEGVLVK…WMLHIERCVT (97 aa)) form the PH domain. Residues 152 to 212 (DGEAVKCMVC…VCDHCFDSLS (61 aa)) form an FYVE-type zinc finger. Positions 158, 161, 175, 178, 183, 186, 204, and 207 each coordinate Zn(2+). A disordered region spans residues 213-266 (SATPGQEESEPKTGNRLHHEDSSSDSEDEVNGSGRSSNESRPTFYREDVQQPAT). Composition is skewed to basic and acidic residues over residues 221–234 (SEPKTGNRLHHEDS) and 256–266 (FYREDVQQPAT).

This is an uncharacterized protein from Caenorhabditis elegans.